Reading from the N-terminus, the 466-residue chain is Ceramide glucosyltransferase 1 (466 aa).

The helical transmembrane segment at 70 to 90 (LALSGCIFVSVLYLVHIIAFF) threads the bilayer. Residue aspartate 148 is a short sequence motif, D1. Aspartate 200 is a short sequence motif (D2). Residue aspartate 294 is a short sequence motif, D3. Aspartate 294 (proton acceptor) is an active-site residue. Positions 330–334 (RIGRW) match the (Q/R)XXRW motif. 2 helical membrane passes run 354–374 (CVTS…YSVY) and 403–423 (TPFL…FIFI).

Belongs to the glycosyltransferase 2 family. As to expression, expressed in excretory canals, pharyngeal intestinal valve, intestine and intestinal rectal valve.

It is found in the membrane. It catalyses the reaction an N-acylsphing-4-enine + UDP-alpha-D-glucose = a beta-D-glucosyl-(1&lt;-&gt;1')-N-acylsphing-4-enine + UDP + H(+). It carries out the reaction an N-acyl-15-methylhexadecasphing-4-enine + UDP-alpha-D-glucose = an N-acyl-1-beta-D-glucosyl-15-methylhexadecasphing-4-enine + UDP + H(+). Its pathway is lipid metabolism; sphingolipid metabolism. Functionally, catalyzes the first glycosylation step in glycosphingolipid biosynthesis, the transfer of glucose to ceramide to produce glucosylceramides (GlcCer). GlcCer are known to contribute to the physical properties and physiological functions of membranes and may regulate signal transduction. Only branched-chain sphingoid bases like 15-methylhexadecasphing-4-enine are used for generating complex sphingolipids in Caenorhabditis elegans. Together with cgt-3, plays a role in the trafficking of proteins such as mig-14 to the cell membrane in intestinal cells. The chain is Ceramide glucosyltransferase 1 from Caenorhabditis elegans.